A 512-amino-acid polypeptide reads, in one-letter code: Serine palmitoyltransferase 3 (512 aa).

K345 carries the N6-(pyridoxal phosphate)lysine modification.

This sequence belongs to the class-II pyridoxal-phosphate-dependent aminotransferase family. Heterodimer of sptl-1/sptl-3. The cofactor is pyridoxal 5'-phosphate.

It catalyses the reaction L-serine + hexadecanoyl-CoA + H(+) = 3-oxosphinganine + CO2 + CoA. Its pathway is lipid metabolism; sphingolipid metabolism. Component of the serine palmitoyltransferase (SPT) that catalyzes the first committed step in sphingolipid biosynthesis, which is the condensation of an acyl-CoA species and L-serine. The catalytic core is composed of a heterodimer of sptl-1 and sptl-2 or sptl-1 and sptl-3. Required for the specification of abicobasal polarity and development of the gut lumen. The chain is Serine palmitoyltransferase 3 (sptl-3) from Caenorhabditis elegans.